A 635-amino-acid polypeptide reads, in one-letter code: MHGLLLAAGLLTLPLRALAHPGHQSTSILSRRGAVDLDAYRVSAKAEYSNVNDVAENPPAVSLMSSGSYVDIATELVKTTLPGVTFRVVNDHYVGTNGVAHVHFRQTIHGVDVDNADFNVNVKDGKVFSFGNGFYKGEIPKENPMVKRDFSDPVHALKGACNALKIPIKTNKVSVKSGKGQESVVFKGTSGALSEPKGDLVYFVKPDGKLSLTWRVETDVGDNWLSSYVDAKDSSKIHGVTDYVADATFQVYPWGLNDPTEGSRQTLTDPWERNASEFTWHSDGNTRYPTTRGNNGIAQDNPSGGTGYLNNYRPQSSALRFEYPYSTSMSPPTSYKDASITQLFYTANTFHDLTYLLGFTERAGNFEVNNNNQGGRGNDFVILNAQDGSGVNNANFATPPDGQPGRMRMYTWNRSQPNRDGCFEAGIVIHEYAHGLSNRLCGGPANSRCLSALESGGMGEGWGDFLATAIRLKANDTRRTSYTMGEWASNQRGGIRQYPYSTSTTTNPLVYTTVNRYNRVHDIGTVWATMLYEVLWNLIDKHGKNDGPRPEFRNGVPTDGKYLTMKLVIDGMALMPCNPNFVQARDAIIDADEALTGGQNKCEIWAGFAKRQLGTGARYGRTNRVGSTEVPSECR.

Positions 1-19 (MHGLLLAAGLLTLPLRALA) are cleaved as a signal peptide. Positions 20-246 (HPGHQSTSIL…IHGVTDYVAD (227 aa)) are excised as a propeptide. N274 carries an N-linked (GlcNAc...) asparagine glycan. The tract at residues 279–307 (TWHSDGNTRYPTTRGNNGIAQDNPSGGTG) is disordered. N413 carries an N-linked (GlcNAc...) asparagine glycan. H430 contacts Zn(2+). E431 is a catalytic residue. H434 lines the Zn(2+) pocket. N475 carries an N-linked (GlcNAc...) asparagine glycan.

The protein belongs to the peptidase M36 family. Zn(2+) is required as a cofactor.

It is found in the secreted. Functionally, secreted metalloproteinase that allows assimilation of proteinaceous substrates. In Uncinocarpus reesii (strain UAMH 1704), this protein is Extracellular metalloproteinase 9 (MEP9).